A 72-amino-acid chain; its full sequence is MSKEDVIQMQGEVIENLPNATFRVKLENGHVLLGHISGKMRMHYIRILPGDKVTVELTPYDLTKGRIVFRAK.

One can recognise an S1-like domain in the interval 1–72 (MSKEDVIQMQ…TKGRIVFRAK (72 aa)).

It belongs to the IF-1 family. Component of the 30S ribosomal translation pre-initiation complex which assembles on the 30S ribosome in the order IF-2 and IF-3, IF-1 and N-formylmethionyl-tRNA(fMet); mRNA recruitment can occur at any time during PIC assembly.

The protein resides in the cytoplasm. One of the essential components for the initiation of protein synthesis. Stabilizes the binding of IF-2 and IF-3 on the 30S subunit to which N-formylmethionyl-tRNA(fMet) subsequently binds. Helps modulate mRNA selection, yielding the 30S pre-initiation complex (PIC). Upon addition of the 50S ribosomal subunit IF-1, IF-2 and IF-3 are released leaving the mature 70S translation initiation complex. This chain is Translation initiation factor IF-1 1, found in Thiobacillus denitrificans (strain ATCC 25259 / T1).